We begin with the raw amino-acid sequence, 577 residues long: MRMKDLYAPTLKETPSDVETVSHEYLLRGGFIRKVAAGIYTYLPLGRRVLLKIENIVREEMNRIGAQEILMPILQPAELWKQSGRWDDYGPEMMKLKDRHERDFTLGPTHEEIVTDLVKNELRSYKQLPLTLYQIANKYRDEIRPRFGLLRAREFIMKDAYSFHASWESLDETYEQFKKAYSRIMERLGVRYMIIEAETGAIGGNASHEFVVPAKIGETNVLFCEKCGYQASDEKAEYKGEYTQEQEEEKPLKKVPTPGVKTIEEVSEFLGVPPSKIVKSLLYKGREGYVMVLIRGDLELNEAKLKAHLKDQSLRMATPEEILKDFGVPVGFIGPIGVDVKKVADHSVRGLKNFVVGGMEEDTHYVNANHPRDFKVDEWYDLRTVVEGDPCPVCGEPLKATKGIELGHIFKLGTKYSEAMKAYFMDENGEMKPFIMGCYGWGVSRTMAAVVEHFHDENGMIWPLSIAPYTVVVDILNMNDAEQKQVGEKIYQVLSEKGEEVVLDDREVSPGFKFKDADLIGFPIRINVGRSLKEGVVELKKRYSKELVKVNIKNGFGALLETLEKMKREYDPKEAVR.

Belongs to the class-II aminoacyl-tRNA synthetase family. ProS type 1 subfamily. As to quaternary structure, homodimer.

It localises to the cytoplasm. The enzyme catalyses tRNA(Pro) + L-proline + ATP = L-prolyl-tRNA(Pro) + AMP + diphosphate. Its function is as follows. Catalyzes the attachment of proline to tRNA(Pro) in a two-step reaction: proline is first activated by ATP to form Pro-AMP and then transferred to the acceptor end of tRNA(Pro). As ProRS can inadvertently accommodate and process non-cognate amino acids such as alanine and cysteine, to avoid such errors it has two additional distinct editing activities against alanine. One activity is designated as 'pretransfer' editing and involves the tRNA(Pro)-independent hydrolysis of activated Ala-AMP. The other activity is designated 'posttransfer' editing and involves deacylation of mischarged Ala-tRNA(Pro). The misacylated Cys-tRNA(Pro) is not edited by ProRS. The sequence is that of Proline--tRNA ligase from Thermotoga maritima (strain ATCC 43589 / DSM 3109 / JCM 10099 / NBRC 100826 / MSB8).